Reading from the N-terminus, the 126-residue chain is Flagellar protein FliT (126 aa).

Residues 1–50 (MVSPHRLLKDYQQLLSLSQKILHLAISGQWDTLVEQEIVYVQSVEGLVNT) are required for homodimerization. Residues 60 to 98 (MRLHLRQILQEVMDNEAKVKQLLQKRMDELSSLMGQSLK) are fliD binding.

This sequence belongs to the FliT family. As to quaternary structure, homodimer. Interacts with FliD and FlhC.

The protein localises to the cytoplasm. The protein resides in the cytosol. In terms of biological role, dual-function protein that regulates the transcription of class 2 flagellar operons and that also acts as an export chaperone for the filament-capping protein FliD. As a transcriptional regulator, acts as an anti-FlhDC factor; it directly binds FlhC, thus inhibiting the binding of the FlhC/FlhD complex to class 2 promoters, resulting in decreased expression of class 2 flagellar operons. As a chaperone, effects FliD transition to the membrane by preventing its premature polymerization, and by directing it to the export apparatus. The chain is Flagellar protein FliT from Pectobacterium atrosepticum (strain SCRI 1043 / ATCC BAA-672) (Erwinia carotovora subsp. atroseptica).